The following is a 276-amino-acid chain: Undecaprenyl-diphosphatase 1 (276 aa).

6 consecutive transmembrane segments (helical) span residues 44 to 63 (ALAFNIIIQLGAILAVIWEY), 85 to 105 (VNLLIAFMPAVVLGVAFADLI), 109 to 129 (LFNPITVAAALVIGGIVMLWA), 183 to 203 (AATEFSFFLAMPTMVGAAVYS), 214 to 234 (GDFAVFAIGFVTSFIFAMLAV), and 249 to 269 (FAWYRIGFGLLILATWQLGMI).

It belongs to the UppP family.

The protein resides in the cell inner membrane. The catalysed reaction is di-trans,octa-cis-undecaprenyl diphosphate + H2O = di-trans,octa-cis-undecaprenyl phosphate + phosphate + H(+). Its function is as follows. Catalyzes the dephosphorylation of undecaprenyl diphosphate (UPP). Confers resistance to bacitracin. This Stutzerimonas stutzeri (strain A1501) (Pseudomonas stutzeri) protein is Undecaprenyl-diphosphatase 1.